Here is a 281-residue protein sequence, read N- to C-terminus: Ribosomal protein L11 methyltransferase (281 aa).

S-adenosyl-L-methionine is bound by residues Thr-133, Gly-154, Asp-175, and Asn-216.

This sequence belongs to the methyltransferase superfamily. PrmA family.

The protein localises to the cytoplasm. It carries out the reaction L-lysyl-[protein] + 3 S-adenosyl-L-methionine = N(6),N(6),N(6)-trimethyl-L-lysyl-[protein] + 3 S-adenosyl-L-homocysteine + 3 H(+). Functionally, methylates ribosomal protein L11. The sequence is that of Ribosomal protein L11 methyltransferase from Campylobacter jejuni subsp. jejuni serotype O:2 (strain ATCC 700819 / NCTC 11168).